A 273-amino-acid polypeptide reads, in one-letter code: MHEAQIRVAIAGAGGRMGRQLIQAAMAMEGVQLGAALEREGSSLLGSDAGELAGAGKSGVIVQSSLEAVKDDFDVFIDFTRPEGTLTHLAFCRQHGKGMVIGTTGFDDAGKQAIREASQEIAIVFAANFSVGVNVMLKLLEKAAKVMGDYSDIEIIEAHHRHKVDAPSGTALAMGEAIAGALDKNLKDCAVYSREGYTGERVPGTIGFATVRAGDIVGEHTAMFADIGERVEITHKASSRMTFANGALRSALWLKTKKNGLFDMRDVLGLDVL.

Residues 12–17 (GAGGRM) and Glu38 contribute to the NAD(+) site. An NADP(+)-binding site is contributed by Arg39. Residues 102–104 (GTT) and 126–129 (AANF) contribute to the NAD(+) site. Catalysis depends on His159, which acts as the Proton donor/acceptor. His160 lines the (S)-2,3,4,5-tetrahydrodipicolinate pocket. Lys163 acts as the Proton donor in catalysis. Position 169–170 (169–170 (GT)) interacts with (S)-2,3,4,5-tetrahydrodipicolinate.

This sequence belongs to the DapB family. As to quaternary structure, homotetramer.

It localises to the cytoplasm. The catalysed reaction is (S)-2,3,4,5-tetrahydrodipicolinate + NAD(+) + H2O = (2S,4S)-4-hydroxy-2,3,4,5-tetrahydrodipicolinate + NADH + H(+). It catalyses the reaction (S)-2,3,4,5-tetrahydrodipicolinate + NADP(+) + H2O = (2S,4S)-4-hydroxy-2,3,4,5-tetrahydrodipicolinate + NADPH + H(+). It functions in the pathway amino-acid biosynthesis; L-lysine biosynthesis via DAP pathway; (S)-tetrahydrodipicolinate from L-aspartate: step 4/4. Catalyzes the conversion of 4-hydroxy-tetrahydrodipicolinate (HTPA) to tetrahydrodipicolinate. The protein is 4-hydroxy-tetrahydrodipicolinate reductase of Salmonella agona (strain SL483).